The primary structure comprises 603 residues: UvrABC system protein C (603 aa).

The GIY-YIG domain occupies 15 to 92 (DQPGCYLMKD…IKKHDPRFNI (78 aa)). A UVR domain is found at 197 to 232 (KTVKNDLMKKMQVAAENMEFEKAGEFRDQINAIETT).

The protein belongs to the UvrC family. As to quaternary structure, interacts with UvrB in an incision complex.

Its subcellular location is the cytoplasm. Functionally, the UvrABC repair system catalyzes the recognition and processing of DNA lesions. UvrC both incises the 5' and 3' sides of the lesion. The N-terminal half is responsible for the 3' incision and the C-terminal half is responsible for the 5' incision. The chain is UvrABC system protein C from Listeria welshimeri serovar 6b (strain ATCC 35897 / DSM 20650 / CCUG 15529 / CIP 8149 / NCTC 11857 / SLCC 5334 / V8).